The sequence spans 887 residues: Microsomal triglyceride transfer protein large subunit (887 aa).

The N-terminal stretch at F1–S11 is a signal peptide. Residues L21–I655 form the Vitellogenin domain. C167 and C187 form a disulfide bridge.

As to quaternary structure, heterodimer; heterodimerizes with the protein disulfide isomerase (P4HB/PDI). Interacts with APOB. Interacts with PRAP1.

The protein resides in the endoplasmic reticulum. The protein localises to the golgi apparatus. The catalysed reaction is a 1,2-diacyl-sn-glycero-3-phosphocholine(in) = a 1,2-diacyl-sn-glycero-3-phosphocholine(out). It catalyses the reaction a 1,2-diacyl-sn-glycero-3-phosphoethanolamine(in) = a 1,2-diacyl-sn-glycero-3-phosphoethanolamine(out). The enzyme catalyses a cholesterol ester(in) = a cholesterol ester(out). It carries out the reaction a triacyl-sn-glycerol(in) = a triacyl-sn-glycerol(out). Functionally, catalyzes the transport of triglyceride, cholesteryl ester, and phospholipid between phospholipid surfaces. Required for the assembly and secretion of plasma lipoproteins that contain apolipoprotein B. May be involved in regulating cholesteryl ester biosynthesis in cells that produce lipoproteins. The polypeptide is Microsomal triglyceride transfer protein large subunit (MTTP) (Bos taurus (Bovine)).